A 193-amino-acid chain; its full sequence is Acyl carrier protein phosphodiesterase (193 aa).

This sequence belongs to the AcpH family.

It catalyses the reaction holo-[ACP] + H2O = apo-[ACP] + (R)-4'-phosphopantetheine + H(+). In terms of biological role, converts holo-ACP to apo-ACP by hydrolytic cleavage of the phosphopantetheine prosthetic group from ACP. The sequence is that of Acyl carrier protein phosphodiesterase from Klebsiella pneumoniae (strain 342).